The following is a 129-amino-acid chain: Small ribosomal subunit protein uS13 (129 aa).

Positions Asn95–Arg114 are enriched in basic residues. A disordered region spans residues Asn95–Lys129.

Belongs to the universal ribosomal protein uS13 family. In terms of assembly, part of the 30S ribosomal subunit. Forms a loose heterodimer with protein S19. Forms two bridges to the 50S subunit in the 70S ribosome.

Its function is as follows. Located at the top of the head of the 30S subunit, it contacts several helices of the 16S rRNA. In the 70S ribosome it contacts the 23S rRNA (bridge B1a) and protein L5 of the 50S subunit (bridge B1b), connecting the 2 subunits; these bridges are implicated in subunit movement. Contacts the tRNAs in the A and P-sites. The polypeptide is Small ribosomal subunit protein uS13 (Dehalococcoides mccartyi (strain ATCC BAA-2100 / JCM 16839 / KCTC 5957 / BAV1)).